The sequence spans 907 residues: Translation initiation factor IF-2 (907 aa).

Residues 1-305 are disordered; that stretch reads MSEGNDQDQG…SLASVRRQRE (305 aa). Positions 62 to 80 are enriched in gly residues; that stretch reads SGSGSSGGGRAGGRGGSGG. 2 stretches are compositionally biased toward basic and acidic residues: residues 93 to 114 and 122 to 158; these read RVLEEQRAEAVRREQERREQEK and EEARRRDEEARRAAEDEVREKEEAAARAREEEAERRA. A compositionally biased stretch (low complexity) spans 211–230; that stretch reads PARPVTPSRPATPAATPQAP. Composition is skewed to basic and acidic residues over residues 240 to 249 and 271 to 280; these read RVGEAEDDRR and KGGDSRRSGR. In terms of domain architecture, tr-type G spans 406 to 576; the sequence is PRPPVVTVMG…LLQAEMLDLR (171 aa). A G1 region spans residues 415–422; the sequence is GHVDHGKT. Position 415–422 (415–422) interacts with GTP; it reads GHVDHGKT. The tract at residues 440 to 444 is G2; the sequence is GITQH. A G3 region spans residues 462-465; it reads DTPG. Residues 462–466 and 516–519 contribute to the GTP site; these read DTPGH and NKCD. Positions 516–519 are G4; it reads NKCD. The G5 stretch occupies residues 552–554; the sequence is SAL.

This sequence belongs to the TRAFAC class translation factor GTPase superfamily. Classic translation factor GTPase family. IF-2 subfamily.

Its subcellular location is the cytoplasm. Functionally, one of the essential components for the initiation of protein synthesis. Protects formylmethionyl-tRNA from spontaneous hydrolysis and promotes its binding to the 30S ribosomal subunits. Also involved in the hydrolysis of GTP during the formation of the 70S ribosomal complex. The polypeptide is Translation initiation factor IF-2 (Gluconacetobacter diazotrophicus (strain ATCC 49037 / DSM 5601 / CCUG 37298 / CIP 103539 / LMG 7603 / PAl5)).